Here is a 625-residue protein sequence, read N- to C-terminus: tRNA uridine 5-carboxymethylaminomethyl modification enzyme MnmG (625 aa).

FAD-binding positions include 11 to 16, Val123, and Ser178; that span reads GAGHAG. 271–285 contributes to the NAD(+) binding site; the sequence is GPRYCPSIETKIVTF. Gln368 is a binding site for FAD.

The protein belongs to the MnmG family. In terms of assembly, homodimer. Heterotetramer of two MnmE and two MnmG subunits. The cofactor is FAD.

Its subcellular location is the cytoplasm. In terms of biological role, NAD-binding protein involved in the addition of a carboxymethylaminomethyl (cmnm) group at the wobble position (U34) of certain tRNAs, forming tRNA-cmnm(5)s(2)U34. The protein is tRNA uridine 5-carboxymethylaminomethyl modification enzyme MnmG of Bacteroides fragilis (strain YCH46).